The primary structure comprises 943 residues: Protein translocase subunit SecA (943 aa).

Residues glutamine 90, glycine 108 to threonine 112, and aspartate 509 contribute to the ATP site. Residues proline 535 to lysine 564 are disordered.

The protein belongs to the SecA family. Monomer and homodimer. Part of the essential Sec protein translocation apparatus which comprises SecA, SecYEG and auxiliary proteins SecDF. Other proteins may also be involved.

Its subcellular location is the cell inner membrane. The protein localises to the cellular thylakoid membrane. The protein resides in the cytoplasm. The enzyme catalyses ATP + H2O + cellular proteinSide 1 = ADP + phosphate + cellular proteinSide 2.. Its function is as follows. Part of the Sec protein translocase complex. Interacts with the SecYEG preprotein conducting channel. Has a central role in coupling the hydrolysis of ATP to the transfer of proteins into and across the cell membrane, serving as an ATP-driven molecular motor driving the stepwise translocation of polypeptide chains across the membrane. In terms of biological role, probably participates in protein translocation into and across both the cytoplasmic and thylakoid membranes in cyanobacterial cells. The polypeptide is Protein translocase subunit SecA (Prochlorococcus marinus (strain MIT 9215)).